The following is a 244-amino-acid chain: tRNA pseudouridine synthase A (244 aa).

The active-site Nucleophile is the aspartate 52. Tyrosine 110 lines the substrate pocket.

It belongs to the tRNA pseudouridine synthase TruA family. Homodimer.

The catalysed reaction is uridine(38/39/40) in tRNA = pseudouridine(38/39/40) in tRNA. Its function is as follows. Formation of pseudouridine at positions 38, 39 and 40 in the anticodon stem and loop of transfer RNAs. This is tRNA pseudouridine synthase A from Clostridium botulinum (strain Eklund 17B / Type B).